Here is a 317-residue protein sequence, read N- to C-terminus: Porphobilinogen deaminase (317 aa).

Cys245 is subject to S-(dipyrrolylmethanemethyl)cysteine.

This sequence belongs to the HMBS family. As to quaternary structure, monomer. Requires dipyrromethane as cofactor.

It catalyses the reaction 4 porphobilinogen + H2O = hydroxymethylbilane + 4 NH4(+). Its pathway is porphyrin-containing compound metabolism; protoporphyrin-IX biosynthesis; coproporphyrinogen-III from 5-aminolevulinate: step 2/4. It participates in porphyrin-containing compound metabolism; chlorophyll biosynthesis. Tetrapolymerization of the monopyrrole PBG into the hydroxymethylbilane pre-uroporphyrinogen in several discrete steps. This is Porphobilinogen deaminase from Synechococcus sp. (strain CC9605).